The chain runs to 349 residues: Ethyl acetate hydrolase (349 aa).

The AB hydrolase-1 domain maps to 67-300 (YIGEGRALDP…SHDQFFTVDD (234 aa)). The active-site Nucleophile is the S139. Residues D293 and H322 contribute to the active site.

This sequence belongs to the AB hydrolase superfamily. Acetyl esterase family. Homodimer.

The catalysed reaction is ethyl acetate + H2O = ethanol + acetate + H(+). Functionally, esterase that catalyzes the hydrolysis of ethyl acetate. Involved in the degradation of short chain methyl ketones (MEK) such as 2-butanone and 2-hexanone. In vitro, can also hydrolyze vinyl acetate, 4-nitrophenyl acetate, methyl acetate, propyl acetate, benzyl acetate and methyl propionate. The highest activities are obtained with acetic acid esters, but the alcohol group also plays an important role, as compounds with two carbon atoms in the alcohol moiety, i.e., vinyl and ethyl acetate, are by far the preferred substrates. The sequence is that of Ethyl acetate hydrolase from Pseudomonas veronii.